A 402-amino-acid chain; its full sequence is UPF0261 protein y4oU (402 aa).

The protein belongs to the UPF0261 family.

This Sinorhizobium fredii (strain NBRC 101917 / NGR234) protein is UPF0261 protein y4oU.